The chain runs to 1202 residues: GACCDGDGRTTRAGGCGRDECDTYVRVCLKEYQAKVTPTGPCSYGYGATPVLGSNSFYLPPAGAAGDRARARSRTGGHQDPGLVVIPFQFAWPRSFTLIVEAWDWDNDTTPDEELLIERVSHAGMINPEDRWKSLHFSGHVAHLELQIRVRCDENYYSATCNKFCRPRNDFFGHYTCDQYGNKACMDGWMGKECKEAVCKQGCNLLHGGCTVPGECRCSYGWQGKFCDECVPYPGCVHGSCVEPWHCDCETNWGGLLCDKDLNYCGSHHPCVNGGTCINAEPDQYLCACPDGYLGKNCERAEHACASNPCANGGSCHEVLSGFECHCPSGWSGPTCALDIDECASNPCAAGGTCVDQVDGFECICPEQWVGATCQLDANECEGKPCLNAFSCKNLIGGYYCDCLPGWKGANCHININDCHGQCQHGGTCKDLVNGYQCVCPRGFGGRHCELEYYKCASSPCRRGGICEDLVDGFRCHCPRGLSGPLCEVDVDLWCEPNPCLNGARCYNLEDDYYCACPEDFGGKNCSVPRETCPGGACRVIDGCGFEAGSRAHGAAPSGVCGPHGHCVSLPGGNFSCICDSGFTGTYCHENIDDCMGQPCRNGGTCIDEVDSFACFCPSGWEGELCDINPNDCLPDPCHSRGRCYDLVNDFYCVCDDGWKDKTCHSREFQCDAYTCSNGGTCYDSGDTFRCACPPGWKGSTCTIAKNSSCVPNPCVNGGTCVGSGDSFSCICRDGWEGRTCTHNTNDCNPLPCYNGGICVDGVNWFRCECAPGFAGPDCRINIDECQSSPCAYGATCVDEINGYRCSCPPGRSGPRCQEVVIFTRPCWSRGVSFPHGSSWVEDCNSCRCLDGHRDCSKVWCGWKPCLLSPQPSALSAQCPPGQQCREKAMGQCLQPPCENWGECTAEDPLPPSTPCLPRTTHLDNNCARLTLHFNRDQVPQGTTVGAICSGIRALPATRAAARDRLLLLLCDRASSGASAVEVAVSFSPARDLPDSSLIQSTAHAIVAAITQRGNSSLLLAVTEVKVETVVMGGSSTGLLVPVLCSVFSVLWLACMVICVWWTRKRRKERERSRLPRDESANNQWAPLNPIRNPIERPGSSGLGTGGHKDVLYQCKNFTPPPRRAGEALPGPASHGAGGEDEEDEELSRGDGRLSRSREVPLTQIHQRPQLLPGKASLLAPGPKVDNRAVRSTKDVRCAGRE.

Residues 1–1037 (GACCDGDGRT…ETVVMGGSST (1037 aa)) lie on the Extracellular side of the membrane. Asparagine 107 carries N-linked (GlcNAc...) asparagine glycosylation. The 45-residue stretch at 150–194 (VRCDENYYSATCNKFCRPRNDFFGHYTCDQYGNKACMDGWMGKEC) folds into the DSL domain. 42 disulfides stabilise this stretch: cysteine 152–cysteine 161, cysteine 165–cysteine 177, cysteine 185–cysteine 194, cysteine 199–cysteine 210, cysteine 203–cysteine 216, cysteine 218–cysteine 227, cysteine 230–cysteine 241, cysteine 236–cysteine 247, cysteine 249–cysteine 258, cysteine 265–cysteine 277, cysteine 271–cysteine 287, cysteine 289–cysteine 298, cysteine 305–cysteine 316, cysteine 310–cysteine 325, cysteine 327–cysteine 336, cysteine 343–cysteine 354, cysteine 348–cysteine 363, cysteine 365–cysteine 374, cysteine 381–cysteine 392, cysteine 386–cysteine 401, cysteine 403–cysteine 412, cysteine 419–cysteine 429, cysteine 423–cysteine 438, cysteine 440–cysteine 449, cysteine 456–cysteine 467, cysteine 461–cysteine 476, cysteine 478–cysteine 487, cysteine 495–cysteine 506, cysteine 500–cysteine 515, cysteine 517–cysteine 526, cysteine 544–cysteine 567, cysteine 561–cysteine 577, cysteine 579–cysteine 588, cysteine 595–cysteine 606, cysteine 600–cysteine 615, cysteine 617–cysteine 626, cysteine 633–cysteine 644, cysteine 638–cysteine 653, cysteine 655–cysteine 664, cysteine 671–cysteine 682, cysteine 676–cysteine 691, and cysteine 693–cysteine 702. The 34-residue stretch at 195-228 (KEAVCKQGCNLLHGGCTVPGECRCSYGWQGKFCD) folds into the EGF-like 1 domain. In terms of domain architecture, EGF-like 2; atypical spans 229-259 (ECVPYPGCVHGSCVEPWHCDCETNWGGLLCD). EGF-like domains are found at residues 261–299 (DLNY…KNCE) and 301–337 (AEHA…PTCA). In terms of domain architecture, EGF-like 5; calcium-binding spans 339-375 (DIDECASNPCAAGGTCVDQVDGFECICPEQWVGATCQ). Positions 377–413 (DANECEGKPCLNAFSCKNLIGGYYCDCLPGWKGANCH) constitute an EGF-like 6; calcium-binding domain. Positions 415–450 (NINDCHGQCQHGGTCKDLVNGYQCVCPRGFGGRHCE) constitute an EGF-like 7; calcium-binding domain. 2 EGF-like domains span residues 452-488 (EYYK…PLCE) and 490-527 (DVDL…KNCS). A glycan (N-linked (GlcNAc...) asparagine) is linked at asparagine 525. The 61-residue stretch at 529 to 589 (PRETCPGGAC…DSGFTGTYCH (61 aa)) folds into the EGF-like 10; atypical domain. N-linked (GlcNAc...) asparagine glycosylation is present at asparagine 574. In terms of domain architecture, EGF-like 11; calcium-binding spans 591-627 (NIDDCMGQPCRNGGTCIDEVDSFACFCPSGWEGELCD). The EGF-like 12; calcium-binding domain maps to 629 to 665 (NPNDCLPDPCHSRGRCYDLVNDFYCVCDDGWKDKTCH). 2 consecutive EGF-like domains span residues 667 to 703 (REFQ…STCT) and 706 to 742 (KNSS…RTCT). A glycan (N-linked (GlcNAc...) asparagine) is linked at asparagine 707. Intrachain disulfides connect cysteine 710/cysteine 721, cysteine 715/cysteine 730, cysteine 732/cysteine 741, cysteine 748/cysteine 759, cysteine 753/cysteine 768, cysteine 770/cysteine 779, cysteine 786/cysteine 797, cysteine 791/cysteine 806, and cysteine 808/cysteine 817. The region spanning 744-780 (NTNDCNPLPCYNGGICVDGVNWFRCECAPGFAGPDCR) is the EGF-like 15; calcium-binding domain. The 37-residue stretch at 782-818 (NIDECQSSPCAYGATCVDEINGYRCSCPPGRSGPRCQ) folds into the EGF-like 16; calcium-binding domain. A glycan (N-linked (GlcNAc...) asparagine) is linked at asparagine 1015. Residues 1038–1058 (GLLVPVLCSVFSVLWLACMVI) traverse the membrane as a helical segment. Topologically, residues 1059-1202 (CVWWTRKRRK…TKDVRCAGRE (144 aa)) are cytoplasmic. Composition is skewed to basic and acidic residues over residues 1070–1080 (RERSRLPRDES), 1147–1159 (LSRG…RSRE), and 1185–1202 (VDNR…AGRE). Residues 1070-1202 (RERSRLPRDE…TKDVRCAGRE (133 aa)) are disordered. Residue serine 1080 is modified to Phosphoserine.

Its subcellular location is the membrane. In terms of biological role, putative Notch ligand involved in the mediation of Notch signaling. May have a role in neurogenesis in the peripheral nervous system, limb development and in the adult brain. The polypeptide is Protein jagged-2 (Jag2) (Rattus norvegicus (Rat)).